Consider the following 539-residue polypeptide: Transcription factor prr1 (539 aa).

The DNA-binding element occupies 7–111 (SSDFVRKLFN…LLDNIKRKAP (105 aa)). At T221 the chain carries Phosphothreonine. S223 is modified (phosphoserine). Polar residues predominate over residues 251-263 (GTAQPSLYNTPSS). Residues 251-281 (GTAQPSLYNTPSSDYELANQEKPADSMASAA) are disordered. A Response regulatory domain is found at 369–483 (RILLVEDDEL…TLLQLLKKQL (115 aa)). D418 carries the post-translational modification 4-aspartylphosphate.

This sequence in the N-terminal section; belongs to the HSF family.

It is found in the nucleus. Its function is as follows. Involved in oxidative stress. Transcription factor that acts upon trr1 and ctt1. The protein is Transcription factor prr1 (prr1) of Schizosaccharomyces pombe (strain 972 / ATCC 24843) (Fission yeast).